A 387-amino-acid polypeptide reads, in one-letter code: Succinate--CoA ligase [ADP-forming] subunit beta (387 aa).

Positions 9–245 (KDLLESYGLK…KSQENAKELK (237 aa)) constitute an ATP-grasp domain. ATP is bound by residues Lys46, 53–55 (GRG), Glu100, Tyr103, and Glu108. Residues Asn200 and Asp214 each contribute to the Mg(2+) site. Substrate is bound by residues Asn265 and 322–324 (GIV).

This sequence belongs to the succinate/malate CoA ligase beta subunit family. Heterotetramer of two alpha and two beta subunits. Mg(2+) serves as cofactor.

The enzyme catalyses succinate + ATP + CoA = succinyl-CoA + ADP + phosphate. It catalyses the reaction GTP + succinate + CoA = succinyl-CoA + GDP + phosphate. It participates in carbohydrate metabolism; tricarboxylic acid cycle; succinate from succinyl-CoA (ligase route): step 1/1. Its function is as follows. Succinyl-CoA synthetase functions in the citric acid cycle (TCA), coupling the hydrolysis of succinyl-CoA to the synthesis of either ATP or GTP and thus represents the only step of substrate-level phosphorylation in the TCA. The beta subunit provides nucleotide specificity of the enzyme and binds the substrate succinate, while the binding sites for coenzyme A and phosphate are found in the alpha subunit. This is Succinate--CoA ligase [ADP-forming] subunit beta from Francisella tularensis subsp. mediasiatica (strain FSC147).